Here is a 294-residue protein sequence, read N- to C-terminus: Glycine--tRNA ligase alpha subunit (294 aa).

This sequence belongs to the class-II aminoacyl-tRNA synthetase family. As to quaternary structure, tetramer of two alpha and two beta subunits.

The protein localises to the cytoplasm. It catalyses the reaction tRNA(Gly) + glycine + ATP = glycyl-tRNA(Gly) + AMP + diphosphate. This chain is Glycine--tRNA ligase alpha subunit, found in Nostoc sp. (strain PCC 7120 / SAG 25.82 / UTEX 2576).